The sequence spans 213 residues: Orotate phosphoribosyltransferase (213 aa).

Residue lysine 26 participates in 5-phospho-alpha-D-ribose 1-diphosphate binding. 34–35 is an orotate binding site; it reads FF. Residues 72–73, arginine 99, lysine 100, lysine 103, histidine 105, and 124–132 each bind 5-phospho-alpha-D-ribose 1-diphosphate; these read YK and DDVITAGTA. Orotate-binding residues include threonine 128 and arginine 156.

It belongs to the purine/pyrimidine phosphoribosyltransferase family. PyrE subfamily. In terms of assembly, homodimer. Requires Mg(2+) as cofactor.

It carries out the reaction orotidine 5'-phosphate + diphosphate = orotate + 5-phospho-alpha-D-ribose 1-diphosphate. It functions in the pathway pyrimidine metabolism; UMP biosynthesis via de novo pathway; UMP from orotate: step 1/2. Functionally, catalyzes the transfer of a ribosyl phosphate group from 5-phosphoribose 1-diphosphate to orotate, leading to the formation of orotidine monophosphate (OMP). In Vibrio cholerae serotype O1 (strain ATCC 39315 / El Tor Inaba N16961), this protein is Orotate phosphoribosyltransferase.